Here is a 357-residue protein sequence, read N- to C-terminus: Isopentenyl-diphosphate delta-isomerase (357 aa).

13–14 contributes to the substrate binding site; it reads RK. Residues Ser-71, 72–74, Ser-102, and Asn-131 each bind FMN; that span reads SMT. 102 to 104 is a substrate binding site; it reads SMR. Gln-166 contacts substrate. Glu-167 is a Mg(2+) binding site. FMN-binding positions include Lys-198 and 311–312; that span reads AR.

Belongs to the IPP isomerase type 2 family. In terms of assembly, homooctamer. Dimer of tetramers. The cofactor is FMN. NADPH is required as a cofactor. Mg(2+) serves as cofactor.

The protein localises to the cytoplasm. The enzyme catalyses isopentenyl diphosphate = dimethylallyl diphosphate. Functionally, involved in the biosynthesis of isoprenoids. Catalyzes the 1,3-allylic rearrangement of the homoallylic substrate isopentenyl (IPP) to its allylic isomer, dimethylallyl diphosphate (DMAPP). The sequence is that of Isopentenyl-diphosphate delta-isomerase from Chlorobium chlorochromatii (strain CaD3).